The primary structure comprises 592 residues: Protein US23 (592 aa).

The interval 407–491 is disordered; that stretch reads PRSLGDGEEE…NNVVPNVDRR (85 aa). Positions 460–481 are enriched in acidic residues; sequence ADDEEQGEDDDDSGAEPMEPEE.

It belongs to the herpesviridae US22 family.

It localises to the virion tegument. The sequence is that of Protein US23 (US23) from Homo sapiens (Human).